We begin with the raw amino-acid sequence, 798 residues long: uncharacterized protein (798 aa).

A signal peptide spans 1–22 (MKFKYGAIVFSGLLGVSAILAA). Residue C23 is the site of N-palmitoyl cysteine attachment. A lipid anchor (S-diacylglycerol cysteine) is attached at C23. A compositionally biased stretch (basic and acidic residues) spans 178-192 (SKGAQKDNKSAEVQR). Disordered stretches follow at residues 178-204 (SKGA…TQPL), 226-260 (NGKK…ATSD), 443-463 (EVNA…QSDQ), and 478-515 (SDIK…TPKK). Polar residues predominate over residues 193–204 (KSTGQKTVTQPL). A compositionally biased stretch (basic and acidic residues) spans 226–235 (NGKKKEEKKS). A compositionally biased stretch (basic and acidic residues) spans 478 to 495 (SDIKVKPKTQAESKKSSD). Residues 496–515 (SKQTANTGKGSNSKQQTPKK) are compositionally biased toward polar residues.

It belongs to the MG185/MG260 family.

Its subcellular location is the cell membrane. This is an uncharacterized protein from Mycoplasma pneumoniae (strain ATCC 29342 / M129 / Subtype 1) (Mycoplasmoides pneumoniae).